The sequence spans 184 residues: ESX-1 secretion-associated protein EspD (184 aa).

The disordered stretch occupies residues 33–56 (IGVGSAATPDTGPDLDNAHGQAET).

It localises to the secreted. In terms of biological role, required for ESX-1 function. Required for the maintenance of adequate cellular levels of both EspA and EspC. Facilitates EsxA secretion. The protein is ESX-1 secretion-associated protein EspD of Mycobacterium tuberculosis (strain CDC 1551 / Oshkosh).